A 188-amino-acid polypeptide reads, in one-letter code: MNAPAMTSDRLVLREEVLGSRRFSNIWWGTVAAIGGIGFLLAGLSSYLRVNLLIVSDTSQLVFIPQGIALLFYGIAGSALSLYLWFTIILDIGGGYNEFNKETGKVTIFRWGFPGKNRRIEVSYPLADIQAIRADIKEGLNTKRKLYIQLKQRREIPLTRVGRPISLSELENQGAELARFLGVPLEGL.

Helical transmembrane passes span 26-46 (IWWG…GLSS) and 70-90 (LLFY…TIIL).

This sequence belongs to the Ycf4 family.

Its subcellular location is the cellular thylakoid membrane. Seems to be required for the assembly of the photosystem I complex. This Rippkaea orientalis (strain PCC 8801 / RF-1) (Cyanothece sp. (strain PCC 8801)) protein is Photosystem I assembly protein Ycf4.